The sequence spans 313 residues: Ribosomal RNA small subunit methyltransferase H (313 aa).

S-adenosyl-L-methionine is bound by residues 35–37, Asp55, Phe79, Asp100, and Gln107; that span reads GGH.

It belongs to the methyltransferase superfamily. RsmH family.

The protein localises to the cytoplasm. The catalysed reaction is cytidine(1402) in 16S rRNA + S-adenosyl-L-methionine = N(4)-methylcytidine(1402) in 16S rRNA + S-adenosyl-L-homocysteine + H(+). Its function is as follows. Specifically methylates the N4 position of cytidine in position 1402 (C1402) of 16S rRNA. The sequence is that of Ribosomal RNA small subunit methyltransferase H from Burkholderia multivorans (strain ATCC 17616 / 249).